Here is a 351-residue protein sequence, read N- to C-terminus: Serine protease inhibitor dipetalogastin (351 aa).

The propeptide occupies 1-131; the sequence is LIKELVNMVI…AETTNAMEVL (131 aa). 6 consecutive Kazal-like domains span residues 19-69, 72-122, 131-181, 184-234, 240-289, and 297-347; these read KELK…PCDE, HDFE…ECHA, LFQG…PCDE, HDFE…ECHP, QLIL…ECKV, and GEVR…RCLP. Cystine bridges form between C25–C50, C27–C46, C35–C67, C78–C103, C80–C99, C88–C120, C137–C162, C139–C158, C147–C179, C190–C215, C192–C211, C200–C232, C246–C271, C248–C267, C256–C287, C303–C328, C305–C324, and C313–C345.

The protein resides in the secreted. Its function is as follows. Thrombin inhibitor. Prevents blood clotting to allow insect to feed on blood. Also functions as an inhibitor of trypsin and plasmin. This Dipetalogaster maximus (Blood-sucking bug) protein is Serine protease inhibitor dipetalogastin.